Consider the following 145-residue polypeptide: MSSSNLSSRKTRISAHFLDAAPAEDEIVTVEGWLTYYDEEKKSWIPLERAQVTIYVDGREVGKAETNEYGMFTFAFPAPYKGRHKLEVRFKGKAGYESSSKSLDFQVMEREQKLKLGRLARDVLLLIIALVFLLFVAIFITNMLR.

A signal peptide spans 1–23 (MSSSNLSSRKTRISAHFLDAAPA). Residues 123–140 (VLLLIIALVFLLFVAIFI) traverse the membrane as a helical segment.

Its subcellular location is the membrane. This is an uncharacterized protein from Archaeoglobus fulgidus (strain ATCC 49558 / DSM 4304 / JCM 9628 / NBRC 100126 / VC-16).